Consider the following 94-residue polypeptide: Integration host factor subunit beta (94 aa).

It belongs to the bacterial histone-like protein family. As to quaternary structure, heterodimer of an alpha and a beta chain.

Functionally, this protein is one of the two subunits of integration host factor, a specific DNA-binding protein that functions in genetic recombination as well as in transcriptional and translational control. This is Integration host factor subunit beta from Histophilus somni (strain 129Pt) (Haemophilus somnus).